Here is a 286-residue protein sequence, read N- to C-terminus: Pyridoxal kinase PdxY (286 aa).

Residues serine 9 and 44–45 (TQ) each bind substrate. Residues aspartate 111, alanine 143, glutamate 148, lysine 181, and 208-211 (RPLV) contribute to the ATP site. Residue aspartate 223 coordinates substrate.

This sequence belongs to the pyridoxine kinase family. PdxY subfamily. Homodimer. The cofactor is Mg(2+).

The catalysed reaction is pyridoxal + ATP = pyridoxal 5'-phosphate + ADP + H(+). It functions in the pathway cofactor metabolism; pyridoxal 5'-phosphate salvage; pyridoxal 5'-phosphate from pyridoxal: step 1/1. Pyridoxal kinase involved in the salvage pathway of pyridoxal 5'-phosphate (PLP). Catalyzes the phosphorylation of pyridoxal to PLP. This chain is Pyridoxal kinase PdxY, found in Yersinia pseudotuberculosis serotype I (strain IP32953).